The sequence spans 815 residues: MVVMKKKRILIVSAIVLLFLTVASAVTVFSADGDTTTQPKVEKAGGVELKVKRFPISRYQANNEASDDLIKGAFVGLTNVTFSFAGNIVRVVDTGMDILYNLQPIDEFANSITNVSKTVYKTLKKNFGEALFIFTCAYVVYLFCVRGSVKEAMRRSILFICVMVIGGLWMSNAGYYMKVLNALSVEAQGKLLTAGNGLVGIVQDEGNFADSSAIEKGKEMEGTVAVMRNLYFDIALMKPFLIVNFDETSEKKINEEDTDKGGLNRIDKLLSYKLSEDGEKDKKDYIKETEIDDYKNESMTSGNVFNQLGESFIAVVASIVIGIPFLALAFFNFLLQVVALVIVFFVPFAFILAYVPQLAYSGFVTLGRLGSVYLLKAMLGVIVLFVYVTCFIVDKLIPPNGFGMYLLNVAVLASILWIGFHKRDAIIKFVTAGKVVSVDNNMMENMRQNIVQPAWEQAKKIGGVWGNGGGVFTDFTKHFGGRKDGSNADGVTGAPSGGGNSPSGTAMGYDNTHAISRTPQKETANGIANHNSRSLKRNPQTLSKEQEKQKQKEAFANAKENKQQSHLARLRKDGINSPMLKDALNEGNEDLSKRAPILQDKKDESARTDQKEYVEQLLKQPNNQQQTDDASLQHEEESTSNRAPVLQENEKDTERTDQKAYIYDEQNQNLETDQQQDFEVQKDDSVSNSEPVAQEKTAEIKRSDQKVMMNQPEPQLGFESPQSTKVENQPIANNERKIRPSEPAKVHSDGIRVDEKQAVAPAENKTVSREKQPSSQTIKRTEQSVNSFDQVSLNEIARRSSSKVEDRLRRDERTR.

An N-terminal signal peptide occupies residues Met1–Ala25. The next 6 helical transmembrane spans lie at Phe127–Gly147, Ile157–Met177, Ser311–Phe331, Phe333–Ala353, Val372–Ile392, and Gly401–His421. The tract at residues Lys483–Arg815 is disordered. Polar residues predominate over residues His513–Ser543. 2 stretches are compositionally biased toward basic and acidic residues: residues Lys544–Gln563 and Gln599–Val614. Residues Lys619–Ala630 are compositionally biased toward polar residues. Basic and acidic residues predominate over residues Glu648 to Gln658. The segment covering Glu665–Phe678 has biased composition (polar residues). Residues Lys696 to Gln705 show a composition bias toward basic and acidic residues. The span at Ser720 to Ala732 shows a compositional bias: polar residues. Basic and acidic residues predominate over residues Asn734–Gln757. A compositionally biased stretch (polar residues) spans Pro773–Leu793. The span at Ile796–Arg815 shows a compositional bias: basic and acidic residues.

It is found in the cell membrane. This is an uncharacterized protein from Bacillus subtilis (strain 168).